The following is a 230-amino-acid chain: Ribonuclease 3 (230 aa).

Residues 1 to 134 (MKQLEELLST…FLGALLLDKG (134 aa)) form the RNase III domain. Glutamate 47 provides a ligand contact to Mg(2+). Residue aspartate 51 is part of the active site. Aspartate 120 and glutamate 123 together coordinate Mg(2+). Glutamate 123 is a catalytic residue. The DRBM domain occupies 160–229 (DYKTCLQEFL…AKNALAQLSE (70 aa)).

This sequence belongs to the ribonuclease III family. In terms of assembly, homodimer. Mg(2+) serves as cofactor.

It localises to the cytoplasm. The enzyme catalyses Endonucleolytic cleavage to 5'-phosphomonoester.. Digests double-stranded RNA. Involved in the processing of primary rRNA transcript to yield the immediate precursors to the large and small rRNAs (23S and 16S). Processes some mRNAs, and tRNAs when they are encoded in the rRNA operon. Processes pre-crRNA and tracrRNA of type II CRISPR loci if present in the organism. This Streptococcus pyogenes serotype M49 (strain NZ131) protein is Ribonuclease 3.